The chain runs to 273 residues: Large ribosomal subunit protein uL2 (273 aa).

2 disordered regions span residues 35–54 and 222–273; these read DSKS…TRHI and GMAM…RRNK. Polar residues predominate over residues 39-49; that stretch reads KSGGRNNNGRI. Residues 229-239 are compositionally biased toward basic and acidic residues; that stretch reads DHPHGGGEGRN. Positions 253–273 are enriched in basic residues; it reads KGFKTRKNKRTDKYIVRRRNK.

The protein belongs to the universal ribosomal protein uL2 family. In terms of assembly, part of the 50S ribosomal subunit. Forms a bridge to the 30S subunit in the 70S ribosome.

Functionally, one of the primary rRNA binding proteins. Required for association of the 30S and 50S subunits to form the 70S ribosome, for tRNA binding and peptide bond formation. It has been suggested to have peptidyltransferase activity; this is somewhat controversial. Makes several contacts with the 16S rRNA in the 70S ribosome. The protein is Large ribosomal subunit protein uL2 of Aeromonas salmonicida (strain A449).